The sequence spans 180 residues: Stathmin-3 (180 aa).

S-palmitoyl cysteine attachment occurs at residues Cys-22 and Cys-24. Residues 38-180 (GDMEVKQLDK…NKEQREEMSG (143 aa)) enclose the SLD domain. Residues Ser-50, Ser-60, Ser-65, Ser-68, Ser-72, Ser-73, and Ser-81 each carry the phosphoserine modification. Low complexity predominate over residues 60-74 (SPSDLSPESPVLSSP). Positions 60 to 81 (SPSDLSPESPVLSSPPKRKDAS) are disordered. Positions 75–179 (PKRKDASLEE…RNKEQREEMS (105 aa)) form a coiled coil.

Belongs to the stathmin family. Interacts with STAT3. Interacts with CLU (secreted form); this interaction may act as an important modulator during neuronal differentiation. Post-translationally, N-terminal palmitoylation promotes specific anchoring to the cytosolic leaflet of Golgi membranes and subsequent vesicular trafficking along dendrites and axons. Neuronal Stathmins are substrates for palmitoyltransferases ZDHHC3, ZDHHC7 and ZDHHC15. Neuron specific.

It localises to the golgi apparatus. Its subcellular location is the cell projection. It is found in the growth cone. The protein localises to the axon. The protein resides in the cytoplasm. It localises to the cytosol. Exhibits microtubule-destabilizing activity, which is antagonized by STAT3. The sequence is that of Stathmin-3 (Stmn3) from Mus musculus (Mouse).